The primary structure comprises 162 residues: Dihydrofolate reductase (162 aa).

The 159-residue stretch at 3 to 161 (KITLIAACAE…TSYAFVHYLR (159 aa)) folds into the DHFR domain. 7–9 (IAA) lines the substrate pocket. Residues 8–9 (AA) and 16–21 (IGAGNA) each bind NADP(+). A substrate-binding site is contributed by aspartate 29. Residue 45–48 (GRKT) coordinates NADP(+). A substrate-binding site is contributed by arginine 60. NADP(+)-binding positions include 65–68 (ISRQ) and 98–103 (MGGAQI). A substrate-binding site is contributed by threonine 117.

Belongs to the dihydrofolate reductase family.

The catalysed reaction is (6S)-5,6,7,8-tetrahydrofolate + NADP(+) = 7,8-dihydrofolate + NADPH + H(+). It functions in the pathway cofactor biosynthesis; tetrahydrofolate biosynthesis; 5,6,7,8-tetrahydrofolate from 7,8-dihydrofolate: step 1/1. In terms of biological role, key enzyme in folate metabolism. Catalyzes an essential reaction for de novo glycine and purine synthesis, and for DNA precursor synthesis. This chain is Dihydrofolate reductase (folA), found in Neisseria meningitidis serogroup A / serotype 4A (strain DSM 15465 / Z2491).